The sequence spans 317 residues: TPR repeat-containing thioredoxin TDX (317 aa).

The segment at 1–48 (MATAGASSFEDEIMESDIELEGEAVEPDNDPPQKMGDPSVEVSDEKRD) is disordered. Residues 9 to 29 (FEDEIMESDIELEGEAVEPDN) show a composition bias toward acidic residues. TPR repeat units lie at residues 50 to 83 (AQLCKNKGVDAFSEGKLDEAIEHLTEAIVLNPTS), 85 to 117 (IAYATRAVIFVKSKKPNAAIRDADAALKINPDS), and 119 to 151 (KGYKSRGMAKAMLGKWEEAAQDLRMAAKLDYDE). One can recognise a Thioredoxin domain in the interval 189–316 (EKQRKHAEEV…LERKVAQHGS (128 aa)). Residues Cys242 and Cys245 each act as nucleophile in the active site. Cysteines 242 and 245 form a disulfide.

The protein belongs to the thioredoxin family.

In terms of biological role, probable thiol-disulfide oxidoreductase that may participate in various redox reactions and act as chaperone under heat shock. May interact with HSP70 proteins through the TPR repeats. This is TPR repeat-containing thioredoxin TDX from Oryza sativa subsp. japonica (Rice).